The following is a 212-amino-acid chain: Telomere repeats-binding bouquet formation protein 2 (212 aa).

It belongs to the TERB2 family. In terms of assembly, component of the MAJIN-TERB1-TERB2 complex.

Its function is as follows. Meiosis-specific telomere-associated protein involved in meiotic telomere attachment to the nucleus inner membrane, a crucial step for homologous pairing and synapsis. Component of the MAJIN-TERB1-TERB2 complex, which promotes telomere cap exchange by mediating attachment of telomeric DNA to the inner nuclear membrane and replacement of the protective cap of telomeric chromosomes: in early meiosis, the MAJIN-TERB1-TERB2 complex associates with telomeric DNA and the shelterin/telosome complex. During prophase, the complex matures and promotes release of the shelterin/telosome complex from telomeric DNA. The protein is Telomere repeats-binding bouquet formation protein 2 of Danio rerio (Zebrafish).